Reading from the N-terminus, the 344-residue chain is Inositol 2-dehydrogenase/D-chiro-inositol 3-dehydrogenase (344 aa).

The protein belongs to the Gfo/Idh/MocA family. In terms of assembly, homotetramer.

The catalysed reaction is myo-inositol + NAD(+) = scyllo-inosose + NADH + H(+). It carries out the reaction 1D-chiro-inositol + NAD(+) = scyllo-inosine + NADH + H(+). The protein operates within polyol metabolism; myo-inositol degradation into acetyl-CoA; acetyl-CoA from myo-inositol: step 1/7. Its function is as follows. Involved in the oxidation of myo-inositol (MI) and D-chiro-inositol (DCI) to 2-keto-myo-inositol (2KMI or 2-inosose) and 1-keto-D-chiro-inositol (1KDCI), respectively. This is Inositol 2-dehydrogenase/D-chiro-inositol 3-dehydrogenase from Bacillus velezensis (strain DSM 23117 / BGSC 10A6 / LMG 26770 / FZB42) (Bacillus amyloliquefaciens subsp. plantarum).